The following is a 1215-amino-acid chain: von Willebrand factor A domain-containing protein 5B1 (1215 aa).

Positions 1 to 18 are cleaved as a signal peptide; it reads MPGLLNCLTGAALPLMES. Residues 19–141 enclose the VIT domain; the sequence is DVTSYVSGYA…NVTVFISTSS (123 aa). The N-linked (GlcNAc...) asparagine glycan is linked to asparagine 132. In terms of domain architecture, VWFA spans 353–532; the sequence is EFIFLIDRSN…KAMAPVLSDV (180 aa). Positions 595–674 are disordered; sequence SVFYPSQDEG…DPTGTARRYP (80 aa). 2 stretches are compositionally biased toward polar residues: residues 608–621 and 646–667; these read GSGNCAKNVNQGQT and YSTNQISSHKTCPRATTASDPT. Residue tyrosine 879 is modified to Phosphotyrosine. Disordered stretches follow at residues 934–953, 964–999, and 1100–1121; these read GSSAGLGRPQSMLREHSSAA, QDSPTSTFNKTPSPGHEKQTTAEGPPQNLSASAPSS, and SPQDCTSLSSSPPSCDGISLKS. Polar residues-rich tracts occupy residues 964-975, 990-999, and 1100-1112; these read QDSPTSTFNKTP, QNLSASAPSS, and SPQDCTSLSSSPP.

The protein resides in the secreted. In Mus musculus (Mouse), this protein is von Willebrand factor A domain-containing protein 5B1 (Vwa5b1).